A 292-amino-acid polypeptide reads, in one-letter code: Elongation factor Ts (292 aa).

Residues 82–85 (TDFV) are involved in Mg(2+) ion dislocation from EF-Tu.

It belongs to the EF-Ts family.

It localises to the cytoplasm. Functionally, associates with the EF-Tu.GDP complex and induces the exchange of GDP to GTP. It remains bound to the aminoacyl-tRNA.EF-Tu.GTP complex up to the GTP hydrolysis stage on the ribosome. This is Elongation factor Ts from Legionella pneumophila (strain Paris).